Consider the following 474-residue polypeptide: Mercuric reductase (474 aa).

The FAD site is built by alanine 19, glycine 39, and threonine 44. Cysteine 45 and cysteine 50 are oxidised to a cystine. The FAD site is built by lysine 54, alanine 119, aspartate 315, and valine 323. Hg(2+) is bound by residues cysteine 471 and cysteine 472.

It belongs to the class-I pyridine nucleotide-disulfide oxidoreductase family. In terms of assembly, homodimer. FAD serves as cofactor.

It catalyses the reaction Hg + NADP(+) + H(+) = Hg(2+) + NADPH. Resistance to Hg(2+) in bacteria appears to be governed by a specialized system which includes mercuric reductase. MerA protein is responsible for volatilizing mercury as Hg(0). The sequence is that of Mercuric reductase (merA) from Streptomyces lividans.